Here is a 376-residue protein sequence, read N- to C-terminus: MSKRDFYEVLGVPKNASDDEIKKAYRKLAMKYHPDRNQGDAAKPAEEKFKEAKEAYEILSDAQKRAAYDQYGHAGVDPNMRGGMGGAEGFGGFAEAFGDIFGDMFGGARGRGGRQVYRGNDLSYAMEITLEEAAKGKEAQIRIPSWESCETCHGSGAKPGTSAKTCGTCQGSGTVQMRQGFFSVQQTCPHCRGTGKIIPEPCTACHGQGRVKKQKTLEVKIPAGIDDGMRIRSTGNGEPGTNGGPPGDLYIEIRIKKHDIFERDGDDLHCQVPVSFITAALGGEIEVPTLQGKAAIDIPEGTQAGKQFRLRGKGIKGVRSSYPGDLYCHIIVETPVKLTEHQRKLLKELDESLKKGGAKHSPSTESWTDRLKSFFS.

In terms of domain architecture, J spans 5 to 72 (DFYEVLGVPK…QKRAAYDQYG (68 aa)). The segment at 136-214 (GKEAQIRIPS…CHGQGRVKKQ (79 aa)) adopts a CR-type zinc-finger fold. Residues Cys149, Cys152, Cys166, Cys169, Cys188, Cys191, Cys202, and Cys205 each coordinate Zn(2+). CXXCXGXG motif repeat units lie at residues 149 to 156 (CETCHGSG), 166 to 173 (CGTCQGSG), 188 to 195 (CPHCRGTG), and 202 to 209 (CTACHGQG). Disordered regions lie at residues 227–246 (DGMR…GGPP) and 352–376 (SLKK…SFFS). The segment covering 237 to 246 (GEPGTNGGPP) has biased composition (gly residues). The span at 367–376 (WTDRLKSFFS) shows a compositional bias: basic and acidic residues.

This sequence belongs to the DnaJ family. Homodimer. Requires Zn(2+) as cofactor.

It is found in the cytoplasm. Functionally, participates actively in the response to hyperosmotic and heat shock by preventing the aggregation of stress-denatured proteins and by disaggregating proteins, also in an autonomous, DnaK-independent fashion. Unfolded proteins bind initially to DnaJ; upon interaction with the DnaJ-bound protein, DnaK hydrolyzes its bound ATP, resulting in the formation of a stable complex. GrpE releases ADP from DnaK; ATP binding to DnaK triggers the release of the substrate protein, thus completing the reaction cycle. Several rounds of ATP-dependent interactions between DnaJ, DnaK and GrpE are required for fully efficient folding. Also involved, together with DnaK and GrpE, in the DNA replication of plasmids through activation of initiation proteins. The polypeptide is Chaperone protein DnaJ (Acidovorax sp. (strain JS42)).